The chain runs to 582 residues: SUMO-activating enzyme subunit uba-2 (582 aa).

ATP contacts are provided by residues 20–25 (GAGGIG), aspartate 44, 52–55 (NLNR), lysine 68, 91–92 (SI), and 113–118 (DNRAAR). Residues cysteine 154 and cysteine 157 each contribute to the Zn(2+) site. The active-site Glycyl thioester intermediate is the cysteine 170. Residues 204-214 (SPDMDAVDPDN) show a composition bias toward acidic residues. Positions 204-235 (SPDMDAVDPDNTEAVTTEKEKEAMKEEPAPVG) are disordered. The span at 219–231 (TTEKEKEAMKEEP) shows a compositional bias: basic and acidic residues. Zn(2+) contacts are provided by cysteine 431 and cysteine 434. Residues 531 to 570 (FEVARSEKEPEPDDRKRKADGSEEPEAKRQKVEEKDDKNG) are compositionally biased toward basic and acidic residues. Positions 531–582 (FEVARSEKEPEPDDRKRKADGSEEPEAKRQKVEEKDDKNGNEAVAEITETMA) are disordered.

The protein belongs to the ubiquitin-activating E1 family. In terms of assembly, heterodimer with aos-1.

The protein operates within protein modification; protein sumoylation. Functionally, the dimeric enzyme acts as an E1 ligase for smo-1. It mediates ATP-dependent activation of smo-1 and formation of a thioester with a conserved cysteine residue on uba-2. The polypeptide is SUMO-activating enzyme subunit uba-2 (uba-2) (Caenorhabditis elegans).